A 207-amino-acid polypeptide reads, in one-letter code: ATP synthase subunit a (207 aa).

A run of 6 helical transmembrane segments spans residues 3-23 (QHVI…TIFA), 62-82 (LIAS…IPGL), 88-108 (NLNT…FEGI), 119-139 (FLGP…LSHL), 158-178 (LISV…VMLI), and 180-200 (LIAV…YIAG).

It belongs to the ATPase A chain family. In terms of assembly, F-type ATPases have 2 components, CF(1) - the catalytic core - and CF(0) - the membrane proton channel. CF(1) has five subunits: alpha(3), beta(3), gamma(1), delta(1), epsilon(1). CF(0) has three main subunits: a(1), b(2) and c(9-12). The alpha and beta chains form an alternating ring which encloses part of the gamma chain. CF(1) is attached to CF(0) by a central stalk formed by the gamma and epsilon chains, while a peripheral stalk is formed by the delta and b chains.

The protein localises to the cell inner membrane. Key component of the proton channel; it plays a direct role in the translocation of protons across the membrane. The polypeptide is ATP synthase subunit a (Sulfurihydrogenibium sp. (strain YO3AOP1)).